We begin with the raw amino-acid sequence, 603 residues long: MTGMNDNNAAIPQQTPRKHALSSKVMQLFRSGSRSSRQGKASSNIQPPSNINTNVPSASKSAKFGLHTPTTATPRVVSNPSNTAGVSKPGMYMPEYYQSASPSHSSSSASLNNHIDINTSKSSSAASLTSSVSALSLSPTSAINISSKSLSPKFSHHSNSNTAITPAPTPTASNINNVNKITNTSAPICGRFLVHKDGTHEHHLKNAKRQEKLSTMIKNMVGASKLRGEAKSAVPDIIMDPKTTLKSNKNPPTLFAGFMKQVVDMDDKYPEGAPTSGALNCPERDIYRSDQKDSKNNTHNITTTKKDRQCFAEKYGRCQEVLGKGAFGVVRICQKKNVSSQDGNKSEKLYAVKEFKRRTSESAEKYSKRLTSEFCISSSLHHTNIVTTLDLFQDAKGEYCEVMEYCAGGDLFTLVVAAGKLEYMEADCFFKQLIRGVVYMHEMGVCHRDLKPENLLLTHDGVLKITDFGNSECFKMAWEKNIHLSGGVCGSSPYIAPEEYIKEEFDPRPVDIWACGVIYMAMRTGRQLWSSAEKDDPFYMNYLKGRKEKGGYEPIESLKRARCRNVIYSMLDPVPYRRINGKQILNSEWGREIKCCHNGRALK.

3 stretches are compositionally biased toward polar residues: residues 1 to 15, 30 to 60, and 68 to 85; these read MTGM…PQQT, RSGS…SASK, and TPTT…NTAG. Disordered regions lie at residues 1–86, 150–171, and 267–301; these read MTGM…TAGV, LSPK…PTPT, and DKYP…THNI. Positions 159–171 are enriched in low complexity; that stretch reads NSNTAITPAPTPT. Basic and acidic residues predominate over residues 282–296; the sequence is PERDIYRSDQKDSKN. The Protein kinase domain occupies 316-590; that stretch reads GRCQEVLGKG…GKQILNSEWG (275 aa). ATP-binding positions include 322–330 and lysine 353; that span reads LGKGAFGVV. Residue aspartate 449 is the Proton acceptor of the active site.

It belongs to the protein kinase superfamily. Ser/Thr protein kinase family.

It carries out the reaction L-seryl-[protein] + ATP = O-phospho-L-seryl-[protein] + ADP + H(+). The enzyme catalyses L-threonyl-[protein] + ATP = O-phospho-L-threonyl-[protein] + ADP + H(+). Its function is as follows. Promotes K(+) uptake, by the potassium transporter TRK1-TRK2, which leads to the subsequent cellular resistance to toxic cations such as Na(+), Li(+) and Ca(2+). This chain is Serine/threonine-protein kinase HAL4/SAT4 (SAT4), found in Saccharomyces cerevisiae (strain ATCC 204508 / S288c) (Baker's yeast).